Reading from the N-terminus, the 740-residue chain is ATP-dependent RNA helicase DDX1 (740 aa).

Residues 1–295 (MAAFSEMGVM…APKALIVEPS (295 aa)) are necessary for interaction with HNRNPK. The interval 1–448 (MAAFSEMGVM…DTVHHVVVPV (448 aa)) is interaction with dsRNA. Residues 1–525 (MAAFSEMGVM…KIDCDNLEQY (525 aa)) are necessary for interaction with RELA. The Helicase ATP-binding domain maps to 2 to 428 (AAFSEMGVMP…SEKIMHFPTW (427 aa)). 46–53 (AETGSGKT) serves as a coordination point for ATP. Residues 70–247 (DQQEGKKGKT…LKFNFGEEEF (178 aa)) form the B30.2/SPRY domain. An N6-acetyllysine mark is found at K239 and K268. Residue K281 is modified to N6-acetyllysine; alternate. K281 is covalently cross-linked (Glycyl lysine isopeptide (Lys-Gly) (interchain with G-Cter in SUMO2); alternate). The DEAD box motif lies at 370-373 (DEAD). Position 481 is a phosphoserine (S481). A Helicase C-terminal domain is found at 493 to 681 (KGEYAVRAIK…QVEPDIKVPV (189 aa)). The segment at 525-740 (YFMQQGGGPD…YLPNQLFRTF (216 aa)) is necessary for interaction with HNRNPK.

This sequence belongs to the DEAD box helicase family. DDX1 subfamily. In terms of assembly, found in a multi-helicase-TICAM1 complex at least composed of DHX36, DDX1, DDX21 and TICAM1; this complex exists in resting cells with or without poly(I:C) RNA ligand stimulation. Interacts with DHX36. Interacts (via B30.2/SPRY domain) with DDX21 (via N-terminus); this interaction serves as bridges to TICAM1. Interacts with FAM98A (via N- and C-terminus). Interacts with MBNL1. Interacts with CSTF2. Interacts with HNRNPK. Interacts with ATM. Interacts with RELA (via C-terminus). Component of the tRNA-splicing ligase complex. Interacts with PHF5A (via C-terminus). Interacts with PQBP1. Interacts with ERCC6. Phosphorylated by ATM kinase; phosphorylation is increased in response to ionizing radiation (IR). Testis-specific. Expressed in the germ line stem cells, spermatogonia and spermatocytes of the testis. Also expressed in the seminoma and nonseminoma types of testicular germ cell tumors (TGCTs) (at protein level).

Its subcellular location is the nucleus. The protein resides in the cytoplasm. It localises to the cytosol. It is found in the cytoplasmic granule. The protein localises to the mitochondrion. It carries out the reaction ATP + H2O = ADP + phosphate + H(+). Acts as an ATP-dependent RNA helicase, able to unwind both RNA-RNA and RNA-DNA duplexes. Possesses 5' single-stranded RNA overhang nuclease activity. Possesses ATPase activity on various RNA, but not DNA polynucleotides. May play a role in RNA clearance at DNA double-strand breaks (DSBs), thereby facilitating the template-guided repair of transcriptionally active regions of the genome. Together with RELA, acts as a coactivator to enhance NF-kappa-B-mediated transcriptional activation. Acts as a positive transcriptional regulator of cyclin CCND2 expression. Binds to the cyclin CCND2 promoter region. Associates with chromatin at the NF-kappa-B promoter region via association with RELA. Binds to poly(A) RNA. May be involved in 3'-end cleavage and polyadenylation of pre-mRNAs. Component of the tRNA-splicing ligase complex required to facilitate the enzymatic turnover of catalytic subunit RTCB: together with archease (ZBTB8OS), acts by facilitating the guanylylation of RTCB, a key intermediate step in tRNA ligation. Component of a multi-helicase-TICAM1 complex that acts as a cytoplasmic sensor of viral double-stranded RNA (dsRNA) and plays a role in the activation of a cascade of antiviral responses including the induction of pro-inflammatory cytokines via the adapter molecule TICAM1. Specifically binds (via helicase ATP-binding domain) on both short and long poly(I:C) dsRNA. This is ATP-dependent RNA helicase DDX1 (Ddx1) from Mus musculus (Mouse).